The sequence spans 238 residues: tRNA (guanine-N(7)-)-methyltransferase (238 aa).

The S-adenosyl-L-methionine site is built by Glu-68, Glu-93, Asp-120, and Asp-143. Asp-143 is a catalytic residue. Residues Lys-147, Asp-179, and 216-219 each bind substrate; that span reads TKFE.

This sequence belongs to the class I-like SAM-binding methyltransferase superfamily. TrmB family.

The enzyme catalyses guanosine(46) in tRNA + S-adenosyl-L-methionine = N(7)-methylguanosine(46) in tRNA + S-adenosyl-L-homocysteine. It participates in tRNA modification; N(7)-methylguanine-tRNA biosynthesis. Its function is as follows. Catalyzes the formation of N(7)-methylguanine at position 46 (m7G46) in tRNA. The sequence is that of tRNA (guanine-N(7)-)-methyltransferase from Aliivibrio fischeri (strain MJ11) (Vibrio fischeri).